Consider the following 146-residue polypeptide: 3-hydroxyacyl-[acyl-carrier-protein] dehydratase FabZ (146 aa).

Residue His-49 is part of the active site.

This sequence belongs to the thioester dehydratase family. FabZ subfamily.

Its subcellular location is the cytoplasm. It carries out the reaction a (3R)-hydroxyacyl-[ACP] = a (2E)-enoyl-[ACP] + H2O. In terms of biological role, involved in unsaturated fatty acids biosynthesis. Catalyzes the dehydration of short chain beta-hydroxyacyl-ACPs and long chain saturated and unsaturated beta-hydroxyacyl-ACPs. The sequence is that of 3-hydroxyacyl-[acyl-carrier-protein] dehydratase FabZ from Pseudomonas entomophila (strain L48).